The primary structure comprises 85 residues: Large ribosomal subunit protein bL27 (85 aa).

A disordered region spans residues methionine 1–leucine 21.

The protein belongs to the bacterial ribosomal protein bL27 family.

This is Large ribosomal subunit protein bL27 from Pseudomonas entomophila (strain L48).